Consider the following 464-residue polypeptide: Cytoplasmic tRNA 2-thiolation protein 2 (464 aa).

This sequence belongs to the CTU2/NCS2 family.

The protein resides in the cytoplasm. It participates in tRNA modification; 5-methoxycarbonylmethyl-2-thiouridine-tRNA biosynthesis. Its function is as follows. Plays a central role in 2-thiolation of mcm(5)S(2)U at tRNA wobble positions of tRNA(Lys), tRNA(Glu) and tRNA(Gln). May act by forming a heterodimer with NCS6/CTU1 that ligates sulfur from thiocarboxylated URM1 onto the uridine of tRNAs at wobble position. The protein is Cytoplasmic tRNA 2-thiolation protein 2 of Oryza sativa subsp. japonica (Rice).